The sequence spans 72 residues: Putative snRNP Sm-like protein (72 aa).

The 69-residue stretch at 4 to 72 folds into the Sm domain; that stretch reads RPLDILNNAL…RGDNVVYVSP (69 aa).

Belongs to the snRNP Sm proteins family.

This chain is Putative snRNP Sm-like protein, found in Methanosarcina acetivorans (strain ATCC 35395 / DSM 2834 / JCM 12185 / C2A).